The following is a 562-amino-acid chain: Arf-GAP domain and FG repeat-containing protein 1 (562 aa).

Residues 11–135 form the Arf-GAP domain; sequence EKHLKMLRDM…WYVPPEQAKV (125 aa). The C4-type zinc-finger motif lies at 29–52; the sequence is CFDCDQRGPTYVNMTVGSFVCTSC. A disordered region spans residues 145 to 193; sequence GSSASSTSSTPEVKPLKSLLGDSAPTLHLNKGTPSQSPVVGRSQGQQQE. Ser-167 is subject to Phosphoserine. Polar residues predominate over residues 176–191; it reads GTPSQSPVVGRSQGQQ. Thr-177 carries the post-translational modification Phosphothreonine. Ser-181 and Ser-362 each carry phosphoserine. Ser-367 carries an O-linked (GlcNAc) serine glycan.

As to quaternary structure, interacts with EPS15R and EPS15. Interacts with FCHO1. In terms of processing, O-glycosylated. Ubiquitously expressed.

It is found in the nucleus. The protein localises to the cytoplasmic vesicle. Its function is as follows. Required for vesicle docking or fusion during acrosome biogenesis. May play a role in RNA trafficking or localization. In case of infection by HIV-1, acts as a cofactor for viral Rev and promotes movement of Rev-responsive element-containing RNAs from the nuclear periphery to the cytoplasm. This step is essential for HIV-1 replication. In Homo sapiens (Human), this protein is Arf-GAP domain and FG repeat-containing protein 1 (AGFG1).